A 106-amino-acid chain; its full sequence is L-rhamnose mutarotase (106 aa).

Position 20 (Tyr20) interacts with substrate. The active-site Proton donor is the His24. Substrate is bound by residues Tyr43 and 78 to 79; that span reads WW.

Belongs to the rhamnose mutarotase family. As to quaternary structure, homodimer.

It localises to the cytoplasm. The enzyme catalyses alpha-L-rhamnose = beta-L-rhamnose. It participates in carbohydrate metabolism; L-rhamnose metabolism. Its function is as follows. Involved in the anomeric conversion of L-rhamnose. The protein is L-rhamnose mutarotase of Leptothrix cholodnii (strain ATCC 51168 / LMG 8142 / SP-6) (Leptothrix discophora (strain SP-6)).